The chain runs to 105 residues: Large ribosomal subunit protein uL24 (105 aa).

It belongs to the universal ribosomal protein uL24 family. As to quaternary structure, part of the 50S ribosomal subunit.

Its function is as follows. One of two assembly initiator proteins, it binds directly to the 5'-end of the 23S rRNA, where it nucleates assembly of the 50S subunit. One of the proteins that surrounds the polypeptide exit tunnel on the outside of the subunit. The protein is Large ribosomal subunit protein uL24 of Clostridium botulinum (strain 657 / Type Ba4).